The following is a 194-amino-acid chain: Calcium channel flower (194 aa).

Helical transmembrane passes span 35 to 55, 66 to 88, and 113 to 133; these read LGIV…FSII, IIQM…VCFE, and AIPP…GLIF.

The protein belongs to the calcium channel flower family. As to quaternary structure, homomultimer. Associates with the dally/ magu complex.

Its subcellular location is the cytoplasmic vesicle. It is found in the secretory vesicle. It localises to the synaptic vesicle membrane. The protein localises to the presynaptic cell membrane. The protein resides in the endosome. Its activity is regulated as follows. Channel activity is inhibited by La(3+), which reduces Ca(2+) influx and thus inhibits it's function in promoting activity-dependent bulk endocytosis (ADBE) in response to high stimuli. Its function is as follows. Transmembrane protein which mediates synaptic endocytosis, fitness-based cell culling, neuronal culling, morphogen gradient scaling, and calcium transport. Regulates synaptic endocytosis and hence couples exo- with endocytosis. Controls two major modes of synaptic vesicle (SV) endocytosis in the synaptic boutons of neuromuscular junctions (NMJs); Ca(2+) channel-independent Clathrin-mediated endocytosis (CME) in response to mild stimulation, and Ca(2+) channel-dependent activity-dependent bulk endocytosis (ADBE) in response to strong stimulation. Functions in ADBE and subsequent SV reformation from bulk endosomes by initiating Ca(2+) channel-dependent phosphatidylinositol 4,5-bisphosphate (PtdIns(4,5)P2) compartmentalization in synaptic boutons. There it acts at the periactive zone to provide the low Ca(2+) levels required to initiate Calcineurin activation and upregulate PtdIns(4,5)P2. Conversely PtdIns(4,5)P2 enhances fwe Ca(2+) channel-activity, establishing a positive feedback loop that induces PtdIns(4,5)P2 microdomain at the periactive zone. These microdomains trigger bulk membrane invagination (i.e. ADBE) by triggering actin polymerization while also promoting localization of fwe to bulk endosomes, thereby removing the ADBE trigger to reduce endocytosis and prevent excess membrane uptake. PtdIns(4,5)P2 then promotes SV reformation from the bulk endosomes, to coordinate ADBE and subsequent SV reformation. Different combinations of the flower isoforms at the cell membrane are also required for the identification and elimination of suboptimal or supernumerary cells during development, regeneration, and adulthood. Required for the recognition and elimination of unfit cells in the developing wing during cell competition. In the developing pupal retina, mediates the elimination of unwanted postmitotic neurons, including supernumerary photoreceptor neurons that form at the periphery of the retina and are contained within incomplete ommatidia units. Also required for efficient elimination and replacement of old neurons by newly generated neurons during regeneration in the adult brain following mechanical injury. Downstream of the flower fitness fingerprints, cells identified as unwanted or unfit are eliminated via apoptosis through the expression of ahuizotl (azot). However, the cells marked for elimination by the flower isoforms only undergo apoptosis if additional thresholds are met; (1) their neighboring fit/healthy cells express different levels of the fwe isoforms, and (2) the levels of the protective signal SPARC expressed by the loser or unwanted cells are unable to inhibit caspase activation. These additional thresholds for flower-mediated apoptosis, allows useful cells to recover from transient and limited stress before they are unnecessarily eliminated. Functions with dally and magu in a mechanism of scaling, which utilises apoptosis to ensure that the dpp morphogen gradient, which mediates organ growth, remains proportional to the size of the growing wing. In this mechanism, fwe represses dally- and Magu-dependent activity in expanding the gradient, and dally/Magu inhibits fwe-dependent apoptosis to keep cell death rate low. When the levels of these different proteins are optimally regulated the gradient correctly scales with organ growth but when this fails, fwe-mediated apoptosis is activated to trim the developing tissue to match the correct size of the gradient. The protein is Calcium channel flower of Drosophila yakuba (Fruit fly).